The sequence spans 245 residues: tRNA pseudouridine synthase A 2 (245 aa).

Asp53 functions as the Nucleophile in the catalytic mechanism. Tyr111 is a binding site for substrate.

Belongs to the tRNA pseudouridine synthase TruA family. As to quaternary structure, homodimer.

It catalyses the reaction uridine(38/39/40) in tRNA = pseudouridine(38/39/40) in tRNA. Its function is as follows. Formation of pseudouridine at positions 38, 39 and 40 in the anticodon stem and loop of transfer RNAs. In Bacillus cereus (strain ATCC 14579 / DSM 31 / CCUG 7414 / JCM 2152 / NBRC 15305 / NCIMB 9373 / NCTC 2599 / NRRL B-3711), this protein is tRNA pseudouridine synthase A 2.